Consider the following 678-residue polypeptide: RNA helicase NPH-II (678 aa).

The Helicase ATP-binding domain maps to 175 to 351; it reads FTSWARRVPV…EFFAESVFVH (177 aa). Position 188-195 (188-195) interacts with ATP; that stretch reads GDTGVGKT. A DEXH box motif is present at residues 300–303; the sequence is DEVH. In terms of domain architecture, Helicase C-terminal spans 371 to 546; that stretch reads PLNRFMYIEE…VFDLQLPEDL (176 aa).

It belongs to the DEAD box helicase family. DEAH subfamily. In terms of assembly, monomer.

Its subcellular location is the virion. The enzyme catalyses ATP + H2O = ADP + phosphate + H(+). In terms of biological role, NTP-dependent helicase that catalyzes unidirectional unwinding of 3'tailed duplex RNAs and plays an important role during transcription of early mRNAs, presumably by preventing R-loop formation behind the elongating RNA polymerase. Might also play a role in the export of newly synthesized mRNA chains out of the core into the cytoplasm. Required for replication and propagation of viral particles. This is RNA helicase NPH-II (OPG084) from Oryctolagus cuniculus (Rabbit).